We begin with the raw amino-acid sequence, 145 residues long: Phosphoribosyl-AMP cyclohydrolase (145 aa).

D87 provides a ligand contact to Mg(2+). Zn(2+) is bound at residue C88. Residues D89 and D91 each coordinate Mg(2+). Zn(2+)-binding residues include C104 and C111.

Belongs to the PRA-CH family. Homodimer. Mg(2+) is required as a cofactor. It depends on Zn(2+) as a cofactor.

The protein resides in the cytoplasm. It carries out the reaction 1-(5-phospho-beta-D-ribosyl)-5'-AMP + H2O = 1-(5-phospho-beta-D-ribosyl)-5-[(5-phospho-beta-D-ribosylamino)methylideneamino]imidazole-4-carboxamide. It functions in the pathway amino-acid biosynthesis; L-histidine biosynthesis; L-histidine from 5-phospho-alpha-D-ribose 1-diphosphate: step 3/9. Catalyzes the hydrolysis of the adenine ring of phosphoribosyl-AMP. The sequence is that of Phosphoribosyl-AMP cyclohydrolase from Nitrobacter winogradskyi (strain ATCC 25391 / DSM 10237 / CIP 104748 / NCIMB 11846 / Nb-255).